The primary structure comprises 405 residues: 3-hydroxy-3-methylglutaryl-coenzyme A reductase (405 aa).

Active-site charge relay system residues include Glu-100 and Asp-310. The active-site Proton donor is His-400.

It belongs to the HMG-CoA reductase family.

The enzyme catalyses (R)-mevalonate + 2 NADP(+) + CoA = (3S)-3-hydroxy-3-methylglutaryl-CoA + 2 NADPH + 2 H(+). It functions in the pathway metabolic intermediate biosynthesis; (R)-mevalonate biosynthesis; (R)-mevalonate from acetyl-CoA: step 3/3. In terms of biological role, converts HMG-CoA to mevalonate. This Methanocaldococcus jannaschii (strain ATCC 43067 / DSM 2661 / JAL-1 / JCM 10045 / NBRC 100440) (Methanococcus jannaschii) protein is 3-hydroxy-3-methylglutaryl-coenzyme A reductase (hmgA).